A 93-amino-acid chain; its full sequence is YcgL domain-containing protein AHA_2135 (93 aa).

The region spanning 1-85 is the YcgL domain; sequence MLCAVYKSRK…PPENLLEQHK (85 aa).

This chain is YcgL domain-containing protein AHA_2135, found in Aeromonas hydrophila subsp. hydrophila (strain ATCC 7966 / DSM 30187 / BCRC 13018 / CCUG 14551 / JCM 1027 / KCTC 2358 / NCIMB 9240 / NCTC 8049).